Consider the following 260-residue polypeptide: MKYVVKLGGAALENPEIFMACARAVADLVKDGHQVALVHGGGVQLTRTLKQLGKQSEFIAGLRVTDAETRDAALMVLSGRVNKSLVAALGSLGQAAMGLSGGDGLIFRARKKRTVPDLGFVGEIVASDPRWLEAIWKMNAVPVISSIALGFDGEYYNVNADEMAAACAAACRADALVFLTDVPGVRGADGTIMRWLTVDQIPVLSQTEVISGGMLPKLGACREALLNGVKRVRILPAEAAHVLPDLCSARVTDGTEVMAS.

Substrate contacts are provided by residues 41–42 (GG), Arg63, and Asn157.

This sequence belongs to the acetylglutamate kinase family. ArgB subfamily.

The protein localises to the cytoplasm. The enzyme catalyses N-acetyl-L-glutamate + ATP = N-acetyl-L-glutamyl 5-phosphate + ADP. It participates in amino-acid biosynthesis; L-arginine biosynthesis; N(2)-acetyl-L-ornithine from L-glutamate: step 2/4. Catalyzes the ATP-dependent phosphorylation of N-acetyl-L-glutamate. This is Acetylglutamate kinase from Acidobacterium capsulatum (strain ATCC 51196 / DSM 11244 / BCRC 80197 / JCM 7670 / NBRC 15755 / NCIMB 13165 / 161).